The following is a 113-amino-acid chain: Hydrogenase maturation factor HypA (113 aa).

Position 2 (His2) interacts with Ni(2+). Residues Cys73, Cys76, Cys89, and Cys92 each coordinate Zn(2+).

This sequence belongs to the HypA/HybF family.

Involved in the maturation of [NiFe] hydrogenases. Required for nickel insertion into the metal center of the hydrogenase. This is Hydrogenase maturation factor HypA from Chlorobium phaeobacteroides (strain BS1).